We begin with the raw amino-acid sequence, 228 residues long: Cytochrome c oxidase subunit 2 (228 aa).

Residues 1–26 (MATWANLGLQDSSSPLMEQLNFFHDH) are Mitochondrial intermembrane-facing. Residues 27–47 (TLLILTMITILVGYIMGMLMF) traverse the membrane as a helical segment. The Mitochondrial matrix segment spans residues 48 to 60 (NQFTNRYLLHGQT). A helical transmembrane segment spans residues 61–81 (IEIIWTVLPAIILMFIALPSL). At 82-228 (RLLYLMDEIN…FIKWITNMTN (147 aa)) the chain is on the mitochondrial intermembrane side. 6 residues coordinate Cu cation: H161, C196, E198, C200, H204, and M207. E198 contacts Mg(2+).

It belongs to the cytochrome c oxidase subunit 2 family. In terms of assembly, component of the cytochrome c oxidase (complex IV, CIV), a multisubunit enzyme composed of a catalytic core of 3 subunits and several supernumerary subunits. The complex exists as a monomer or a dimer and forms supercomplexes (SCs) in the inner mitochondrial membrane with ubiquinol-cytochrome c oxidoreductase (cytochrome b-c1 complex, complex III, CIII). It depends on Cu cation as a cofactor.

The protein resides in the mitochondrion inner membrane. The catalysed reaction is 4 Fe(II)-[cytochrome c] + O2 + 8 H(+)(in) = 4 Fe(III)-[cytochrome c] + 2 H2O + 4 H(+)(out). Component of the cytochrome c oxidase, the last enzyme in the mitochondrial electron transport chain which drives oxidative phosphorylation. The respiratory chain contains 3 multisubunit complexes succinate dehydrogenase (complex II, CII), ubiquinol-cytochrome c oxidoreductase (cytochrome b-c1 complex, complex III, CIII) and cytochrome c oxidase (complex IV, CIV), that cooperate to transfer electrons derived from NADH and succinate to molecular oxygen, creating an electrochemical gradient over the inner membrane that drives transmembrane transport and the ATP synthase. Cytochrome c oxidase is the component of the respiratory chain that catalyzes the reduction of oxygen to water. Electrons originating from reduced cytochrome c in the intermembrane space (IMS) are transferred via the dinuclear copper A center (CU(A)) of subunit 2 and heme A of subunit 1 to the active site in subunit 1, a binuclear center (BNC) formed by heme A3 and copper B (CU(B)). The BNC reduces molecular oxygen to 2 water molecules using 4 electrons from cytochrome c in the IMS and 4 protons from the mitochondrial matrix. In Anopheles quadrimaculatus (Common malaria mosquito), this protein is Cytochrome c oxidase subunit 2 (COXII).